Reading from the N-terminus, the 395-residue chain is Na(+)/H(+) antiporter NhaA (395 aa).

Helical transmembrane passes span F15–V35, I66–I86, V101–L121, G132–G152, A161–F181, N184–A204, C219–I239, A265–V285, L301–L321, V339–L359, and L366–W386.

The protein belongs to the NhaA Na(+)/H(+) (TC 2.A.33) antiporter family.

Its subcellular location is the cell inner membrane. The enzyme catalyses Na(+)(in) + 2 H(+)(out) = Na(+)(out) + 2 H(+)(in). Its function is as follows. Na(+)/H(+) antiporter that extrudes sodium in exchange for external protons. The polypeptide is Na(+)/H(+) antiporter NhaA (Gluconacetobacter diazotrophicus (strain ATCC 49037 / DSM 5601 / CCUG 37298 / CIP 103539 / LMG 7603 / PAl5)).